The following is a 358-amino-acid chain: Arginase (358 aa).

Mn(2+) contacts are provided by His-146, Asp-174, His-176, and Asp-178. Residues His-176–Asn-180, Ser-187–Asn-189, and Asp-233 each bind substrate. Mn(2+)-binding residues include Asp-280 and Asp-282. Substrate is bound by residues Thr-294 and Glu-325.

Belongs to the arginase family. As to quaternary structure, homohexamer. It depends on Mn(2+) as a cofactor.

The protein resides in the cytoplasm. It catalyses the reaction L-arginine + H2O = urea + L-ornithine. The protein operates within nitrogen metabolism; urea cycle; L-ornithine and urea from L-arginine: step 1/1. The protein is Arginase (aga-1) of Neurospora crassa (strain ATCC 24698 / 74-OR23-1A / CBS 708.71 / DSM 1257 / FGSC 987).